The following is a 1401-amino-acid chain: DNA-directed RNA polymerase subunit beta' (1401 aa).

4 residues coordinate Zn(2+): C70, C72, C85, and C88. Mg(2+) is bound by residues D460, D462, and D464. Zn(2+)-binding residues include C808, C882, C889, and C892.

It belongs to the RNA polymerase beta' chain family. As to quaternary structure, the RNAP catalytic core consists of 2 alpha, 1 beta, 1 beta' and 1 omega subunit. When a sigma factor is associated with the core the holoenzyme is formed, which can initiate transcription. The cofactor is Mg(2+). It depends on Zn(2+) as a cofactor.

The enzyme catalyses RNA(n) + a ribonucleoside 5'-triphosphate = RNA(n+1) + diphosphate. Its function is as follows. DNA-dependent RNA polymerase catalyzes the transcription of DNA into RNA using the four ribonucleoside triphosphates as substrates. In Legionella pneumophila (strain Paris), this protein is DNA-directed RNA polymerase subunit beta'.